A 192-amino-acid chain; its full sequence is Protein SHORT HYPOCOTYL IN WHITE LIGHT 1 (192 aa).

Residues 43–50 (FRRLNRSL) carry the Nuclear localization signal motif. Residues 70-92 (GGDNYDVVPDDDGFSDDDDEEDE) form a disordered region. The segment covering 77-92 (VPDDDGFSDDDDEEDE) has biased composition (acidic residues). 2 helical membrane passes run 122–142 (ILPA…ILLL) and 159–179 (GGTV…ASFF).

Interacts with HY5 and COP1 in the nucleus. Expressed in young seedlings (e.g. hypocotyl and cotyledons) and in green tissues (e.g. leaves, stems, sepals, and young siliques).

The protein localises to the nucleus membrane. Negative regulator of photomorphogenesis modulating both light and abscisic acid (ABA) signaling pathways. Negatively regulates the light-mediated inhibition of hypocotyl elongation, probably in a PHYB-mediated signaling pathway, but promotes flowering time (especially in long days) and lateral root formation. Enhances light-regulated gene expression. Promotes COP1-mediated degradation of HY5 during seedling development (e.g. hypocotyl growth) through enhanced ubiquitination in the darkness. Also involved in root gravitropism. This Arabidopsis thaliana (Mouse-ear cress) protein is Protein SHORT HYPOCOTYL IN WHITE LIGHT 1.